We begin with the raw amino-acid sequence, 152 residues long: Mid1-interacting protein 1A (152 aa).

Over residues 87-105 the composition is skewed to basic and acidic residues; sequence SEDQRRKKDTSASEPVRTE. The segment at 87-109 is disordered; the sequence is SEDQRRKKDTSASEPVRTEEESD.

Belongs to the SPOT14 family. In terms of tissue distribution, expressed for a short period in the cells that will produce the enveloping layer (EVL).

The protein localises to the nucleus. It localises to the cytoplasm. It is found in the cytoskeleton. Involved in stabilization of microtubules. May play a role in the regulation of lipogenesis. The chain is Mid1-interacting protein 1A (mid1ip1a) from Danio rerio (Zebrafish).